A 518-amino-acid polypeptide reads, in one-letter code: Dihydro-ML-236C monooxygenase mlcC (518 aa).

Residues 1 to 31 (MLGQVLLTVESYQWVSTPQALVAVAVLLSLI) are Cytoplasmic-facing. The chain crosses the membrane as a helical; Signal-anchor for type II membrane protein span at residues 32–48 (AYRLRGRQSELQVYNPK). Topologically, residues 49–518 (KWWELTTMRA…EDIPLPHDRC (470 aa)) are lumenal. Cysteine 454 contributes to the heme binding site.

Belongs to the cytochrome P450 family. Requires heme as cofactor.

The protein resides in the endoplasmic reticulum membrane. It catalyses the reaction dihydro-ML-236C carboxylate + reduced [NADPH--hemoprotein reductase] + O2 = ML-236C carboxylate + oxidized [NADPH--hemoprotein reductase] + 2 H2O + H(+). The enzyme catalyses ML-236C carboxylate + reduced [NADPH--hemoprotein reductase] + O2 = ML-236A carboxylate + oxidized [NADPH--hemoprotein reductase] + H2O + H(+). It participates in polyketide biosynthesis. Its function is as follows. Dihydro-ML-236C carboxylate monooxygenase; part of the gene cluster that mediates the biosynthesis of compactin, also known as mevastatin or ML-236B, and which acts as a potent competitive inhibitor of HMG-CoA reductase. Compactin biosynthesis is performed in two stages. The first stage is catalyzed by the nonaketide synthase mlcA, which belongs to type I polyketide synthases and catalyzes the iterative nine-step formation of the polyketide. This PKS stage is completed by the action of dehydrogenase mlcG, which catalyzes the NADPH-dependent reduction of the unsaturated tetra-, penta- and heptaketide intermediates that arise during the mlcA-mediated biosynthesis of the nonaketide chain and leads to dihydro-ML-236C carboxylate. Covalently bound dihydro-ML-236C carboxylate is released from mlcA by the mlcF esterase. Conversion of dihydro-ML-236C carboxylate into ML-236A carboxylate is subsequently performed with the participation of molecular oxygen and P450 monoogygenase mlcC. Finally, mlcH performs the conversion of ML-236A carboxylate to ML-236B/compactin carboxylate through the addition of the side-chain diketide moiety produced by the diketide synthase mlcB. The chain is Dihydro-ML-236C monooxygenase mlcC from Penicillium citrinum.